The chain runs to 339 residues: Histidine protein methyltransferase 1 (339 aa).

A phosphoserine mark is found at S333 and S338.

It belongs to the methyltransferase superfamily. METTL18 family.

The protein resides in the cytoplasm. It localises to the nucleus. The enzyme catalyses L-histidyl-[protein] + S-adenosyl-L-methionine = N(tele)-methyl-L-histidyl-[protein] + S-adenosyl-L-homocysteine + H(+). Functionally, protein-histidine N-methyltransferase that mediates methylation of target protein on His residues. The sequence is that of Histidine protein methyltransferase 1 from Schizosaccharomyces pombe (strain 972 / ATCC 24843) (Fission yeast).